Reading from the N-terminus, the 125-residue chain is Large ribosomal subunit protein bL12 (125 aa).

This sequence belongs to the bacterial ribosomal protein bL12 family. In terms of assembly, homodimer. Part of the ribosomal stalk of the 50S ribosomal subunit. Forms a multimeric L10(L12)X complex, where L10 forms an elongated spine to which 2 to 4 L12 dimers bind in a sequential fashion. Binds GTP-bound translation factors.

Functionally, forms part of the ribosomal stalk which helps the ribosome interact with GTP-bound translation factors. Is thus essential for accurate translation. The sequence is that of Large ribosomal subunit protein bL12 from Delftia acidovorans (strain DSM 14801 / SPH-1).